The primary structure comprises 498 residues: ATP synthase subunit beta, chloroplastic (498 aa).

172-179 (GGAGVGKT) contacts ATP.

It belongs to the ATPase alpha/beta chains family. As to quaternary structure, F-type ATPases have 2 components, CF(1) - the catalytic core - and CF(0) - the membrane proton channel. CF(1) has five subunits: alpha(3), beta(3), gamma(1), delta(1), epsilon(1). CF(0) has four main subunits: a(1), b(1), b'(1) and c(9-12).

The protein localises to the plastid. The protein resides in the chloroplast thylakoid membrane. It catalyses the reaction ATP + H2O + 4 H(+)(in) = ADP + phosphate + 5 H(+)(out). Functionally, produces ATP from ADP in the presence of a proton gradient across the membrane. The catalytic sites are hosted primarily by the beta subunits. This Spinacia oleracea (Spinach) protein is ATP synthase subunit beta, chloroplastic.